The primary structure comprises 391 residues: NAD(P)H-quinone oxidoreductase subunit H, chloroplastic (391 aa).

It belongs to the complex I 49 kDa subunit family. In terms of assembly, NDH is composed of at least 16 different subunits, 5 of which are encoded in the nucleus.

It is found in the plastid. The protein localises to the chloroplast thylakoid membrane. The catalysed reaction is a plastoquinone + NADH + (n+1) H(+)(in) = a plastoquinol + NAD(+) + n H(+)(out). It carries out the reaction a plastoquinone + NADPH + (n+1) H(+)(in) = a plastoquinol + NADP(+) + n H(+)(out). Its function is as follows. NDH shuttles electrons from NAD(P)H:plastoquinone, via FMN and iron-sulfur (Fe-S) centers, to quinones in the photosynthetic chain and possibly in a chloroplast respiratory chain. The immediate electron acceptor for the enzyme in this species is believed to be plastoquinone. Couples the redox reaction to proton translocation, and thus conserves the redox energy in a proton gradient. The chain is NAD(P)H-quinone oxidoreductase subunit H, chloroplastic from Chaetosphaeridium globosum (Charophycean green alga).